The following is a 37-amino-acid chain: Large ribosomal subunit protein bL36 (37 aa).

The protein belongs to the bacterial ribosomal protein bL36 family.

This is Large ribosomal subunit protein bL36 from Francisella tularensis subsp. tularensis (strain FSC 198).